The following is a 443-amino-acid chain: UDP-N-acetylmuramate--L-alanine ligase (443 aa).

Gly110–Ser116 is an ATP binding site.

Belongs to the MurCDEF family.

The protein localises to the cytoplasm. It catalyses the reaction UDP-N-acetyl-alpha-D-muramate + L-alanine + ATP = UDP-N-acetyl-alpha-D-muramoyl-L-alanine + ADP + phosphate + H(+). It functions in the pathway cell wall biogenesis; peptidoglycan biosynthesis. In terms of biological role, cell wall formation. This Streptococcus suis (strain 98HAH33) protein is UDP-N-acetylmuramate--L-alanine ligase.